The primary structure comprises 550 residues: Methyl-coenzyme M reductase I subunit alpha (550 aa).

Gln147 contacts coenzyme F430. Residues Arg225, 256-257 (KH), and Arg270 each bind coenzyme B. His257 is modified (pros-methylhistidine). The residue at position 271 (Arg271) is a 5-methylarginine. Tyr333 contacts coenzyme M. At Gln400 the chain carries 2-methylglutamine. Tyr444 serves as a coordination point for coenzyme M. The residue at position 445 (Gly445) is a 1-thioglycine. A (Z)-2,3-didehydroaspartate modification is found at Asp450. Position 452 is an S-methylcysteine (Cys452).

It belongs to the methyl-coenzyme M reductase alpha subunit family. As to quaternary structure, MCR is a hexamer of two alpha, two beta, and two gamma chains, forming a dimer of heterotrimers. Coenzyme F430 serves as cofactor. The alpha subunit contains six modified amino acids near the active site region. Is methylated on His-257, Arg-271, Gln-400 and Cys-452, probably by the action of specific S-adenosylmethionine-dependent methyltransferases. Also contains a thioglycine at position 445, forming a thiopeptide bond. Contains a didehydroaspartate residue at position 450. The methylation on C5 of Arg-271 is a post-translational methylation not essential in vivo, but which plays a role for the stability and structural integrity of MCR.

Its subcellular location is the cytoplasm. It carries out the reaction coenzyme B + methyl-coenzyme M = methane + coenzyme M-coenzyme B heterodisulfide. Its pathway is one-carbon metabolism; methyl-coenzyme M reduction; methane from methyl-coenzyme M: step 1/1. Its activity is regulated as follows. Methyl-coenzyme M reductase activity is inhibited by 3-nitrooxypropanol (3-NOP) in vitro and in vivo, by oxidation of its active site Ni(I), which stops both growth and methanogenesis. Is also inhibited by the reaction product CoM-S-S-CoB. Component of the methyl-coenzyme M reductase (MCR) I that catalyzes the reductive cleavage of methyl-coenzyme M (CoM-S-CH3 or 2-(methylthio)ethanesulfonate) using coenzyme B (CoB or 7-mercaptoheptanoylthreonine phosphate) as reductant which results in the production of methane and the mixed heterodisulfide of CoB and CoM (CoM-S-S-CoB). This is the final step in methanogenesis. Neither N-6-mercaptohexanoylthreonine phosphate (H-S-HxoTP) nor N-8-mercaptooctanoylthreonine phosphate (H-SOcoTP) nor any other thiol compound such as CoA or CoM can substitute for CoB as the electron donor. The sequence is that of Methyl-coenzyme M reductase I subunit alpha (mcrA) from Methanothermobacter marburgensis (strain ATCC BAA-927 / DSM 2133 / JCM 14651 / NBRC 100331 / OCM 82 / Marburg) (Methanobacterium thermoautotrophicum).